A 424-amino-acid chain; its full sequence is Gamma-glutamyl phosphate reductase (424 aa).

It belongs to the gamma-glutamyl phosphate reductase family.

The protein localises to the cytoplasm. The catalysed reaction is L-glutamate 5-semialdehyde + phosphate + NADP(+) = L-glutamyl 5-phosphate + NADPH + H(+). The protein operates within amino-acid biosynthesis; L-proline biosynthesis; L-glutamate 5-semialdehyde from L-glutamate: step 2/2. Catalyzes the NADPH-dependent reduction of L-glutamate 5-phosphate into L-glutamate 5-semialdehyde and phosphate. The product spontaneously undergoes cyclization to form 1-pyrroline-5-carboxylate. This is Gamma-glutamyl phosphate reductase from Dehalococcoides mccartyi (strain ATCC BAA-2266 / KCTC 15142 / 195) (Dehalococcoides ethenogenes (strain 195)).